Reading from the N-terminus, the 433-residue chain is Lipase 2 (433 aa).

The Involved in the stabilization of the negatively charged intermediate by the formation of the oxyanion hole motif lies at 165 to 167 (HGG). The active-site Charge relay system is the Ser-239. Catalysis depends on residues Asp-361 and His-391.

This sequence belongs to the 'GDXG' lipolytic enzyme family.

The enzyme catalyses a triacylglycerol + H2O = a diacylglycerol + a fatty acid + H(+). The chain is Lipase 2 (lip2) from Moraxella sp. (strain TA144).